The primary structure comprises 190 residues: Potassium-transporting ATPase KdpC subunit (190 aa).

A helical membrane pass occupies residues 13 to 33; it reads VGFLLLTLMCGVVYPGIVTIF.

Belongs to the KdpC family. In terms of assembly, the system is composed of three essential subunits: KdpA, KdpB and KdpC.

The protein localises to the cell membrane. Functionally, part of the high-affinity ATP-driven potassium transport (or Kdp) system, which catalyzes the hydrolysis of ATP coupled with the electrogenic transport of potassium into the cytoplasm. This subunit acts as a catalytic chaperone that increases the ATP-binding affinity of the ATP-hydrolyzing subunit KdpB by the formation of a transient KdpB/KdpC/ATP ternary complex. This chain is Potassium-transporting ATPase KdpC subunit, found in Listeria monocytogenes serotype 4a (strain HCC23).